The sequence spans 185 residues: Ribosome-recycling factor (185 aa).

Belongs to the RRF family.

Its subcellular location is the cytoplasm. Responsible for the release of ribosomes from messenger RNA at the termination of protein biosynthesis. May increase the efficiency of translation by recycling ribosomes from one round of translation to another. This is Ribosome-recycling factor from Shewanella sp. (strain ANA-3).